A 417-amino-acid polypeptide reads, in one-letter code: Probable glucuronosyltransferase GUT1 (417 aa).

The Cytoplasmic segment spans residues 1–15 (MGTRRRSARARARPP). Residues 16–36 (LAMPLAVLLLFACSSGVAAAA) traverse the membrane as a helical; Signal-anchor for type II membrane protein segment. Residues 37-417 (AQGIERIKDD…EGTREDLKPW (381 aa)) lie on the Lumenal side of the membrane. Residues asparagine 144 and asparagine 405 are each glycosylated (N-linked (GlcNAc...) asparagine).

The protein belongs to the glycosyltransferase 47 family.

The protein localises to the golgi apparatus membrane. Involved in the synthesis of glucuronoxylan hemicellulose in secondary cell walls. This is Probable glucuronosyltransferase GUT1 (GUT1) from Oryza sativa subsp. japonica (Rice).